The following is a 287-amino-acid chain: ATP synthase gamma chain (287 aa).

Belongs to the ATPase gamma chain family. As to quaternary structure, F-type ATPases have 2 components, CF(1) - the catalytic core - and CF(0) - the membrane proton channel. CF(1) has five subunits: alpha(3), beta(3), gamma(1), delta(1), epsilon(1). CF(0) has three main subunits: a, b and c.

The protein resides in the cell inner membrane. Produces ATP from ADP in the presence of a proton gradient across the membrane. The gamma chain is believed to be important in regulating ATPase activity and the flow of protons through the CF(0) complex. This chain is ATP synthase gamma chain, found in Alkalilimnicola ehrlichii (strain ATCC BAA-1101 / DSM 17681 / MLHE-1).